The chain runs to 1193 residues: DNA-directed RNA polymerase subunit beta (1193 aa).

Positions 1173 to 1193 (QQAKEAAELEKAKEEALDKTE) are disordered. Positions 1177-1193 (EAAELEKAKEEALDKTE) are enriched in basic and acidic residues.

Belongs to the RNA polymerase beta chain family. In terms of assembly, the RNAP catalytic core consists of 2 alpha, 1 beta, 1 beta' and 1 omega subunit. When a sigma factor is associated with the core the holoenzyme is formed, which can initiate transcription.

It catalyses the reaction RNA(n) + a ribonucleoside 5'-triphosphate = RNA(n+1) + diphosphate. Its function is as follows. DNA-dependent RNA polymerase catalyzes the transcription of DNA into RNA using the four ribonucleoside triphosphates as substrates. This chain is DNA-directed RNA polymerase subunit beta, found in Streptococcus thermophilus (strain CNRZ 1066).